The chain runs to 454 residues: Natural cytotoxicity triggering receptor 3 ligand 1 (454 aa).

The N-terminal stretch at 1–24 (MTWRAAASTCAALLILLWALTTEG) is a signal peptide. Residues 25–262 (DLKVEMMAGG…SETEKTDNFS (238 aa)) lie on the Extracellular side of the membrane. The Ig-like V-type domain occupies 27–138 (KVEMMAGGTQ…LKAQGTVQLE (112 aa)). N-linked (GlcNAc...) asparagine glycosylation is found at Asn43 and Asn57. An intrachain disulfide couples Cys48 to Cys122. 2 interaction with NCR3 regions span residues 59-62 (TSMG) and 127-130 (TPLK). The 102-residue stretch at 143-244 (PASRLLLDQV…LHTPLRSNFT (102 aa)) folds into the Ig-like C1-type domain. An intrachain disulfide couples Cys163 to Cys228. Residues Asn174, Asn208, Asn216, Asn242, and Asn260 are each glycosylated (N-linked (GlcNAc...) asparagine). Residues 263 to 283 (IHWWPISFIGVGLVLLIVLIP) form a helical membrane-spanning segment. The Cytoplasmic portion of the chain corresponds to 284–454 (WKKICNKSSS…QPPTLLLPLQ (171 aa)). The interval 291 to 429 (SSSAYTPLKC…APILPVSPIW (139 aa)) is retroviral-Gag-like. The tract at residues 395 to 454 (GKSIDDNSTKSEKQTPREHSDAVPDAPILPVSPIWEPPPATTSTTPVLSSQPPTLLLPLQ) is disordered. The span at 397–416 (SIDDNSTKSEKQTPREHSDA) shows a compositional bias: basic and acidic residues. A compositionally biased stretch (low complexity) spans 435-454 (TTSTTPVLSSQPPTLLLPLQ).

As to quaternary structure, monomer. Interacts specifically with NCR3, but not with other natural killer cell-activating receptors, including NCR1, NCR2 and KLRK1. Not detected in any normal tissue tested. Expressed at the surface of several tumor cell lines including T and B-lymphomas, myeloid leukemias, melanomas, carcinomas and large T SV40 antigen-transformed cells (at protein level).

Its subcellular location is the cell membrane. Triggers NCR3-dependent natural killer cell activation. The protein is Natural cytotoxicity triggering receptor 3 ligand 1 (NCR3LG1) of Homo sapiens (Human).